A 208-amino-acid chain; its full sequence is Large ribosomal subunit protein uL3 (208 aa).

Residues 116–148 (GFQGVIKRHGQSRGPMAHGSRYHRRPGSMGPVA) are disordered.

Belongs to the universal ribosomal protein uL3 family. In terms of assembly, part of the 50S ribosomal subunit. Forms a cluster with proteins L14 and L19.

Functionally, one of the primary rRNA binding proteins, it binds directly near the 3'-end of the 23S rRNA, where it nucleates assembly of the 50S subunit. In Streptococcus pneumoniae (strain Hungary19A-6), this protein is Large ribosomal subunit protein uL3.